The sequence spans 267 residues: Glucosamine-6-phosphate deaminase (267 aa).

Asp72 (proton acceptor; for enolization step) is an active-site residue. Residue Asp141 is the For ring-opening step of the active site. Residue His143 is the Proton acceptor; for ring-opening step of the active site. The For ring-opening step role is filled by Glu148.

This sequence belongs to the glucosamine/galactosamine-6-phosphate isomerase family. NagB subfamily. As to quaternary structure, homohexamer.

It catalyses the reaction alpha-D-glucosamine 6-phosphate + H2O = beta-D-fructose 6-phosphate + NH4(+). It functions in the pathway amino-sugar metabolism; N-acetylneuraminate degradation; D-fructose 6-phosphate from N-acetylneuraminate: step 5/5. Its activity is regulated as follows. Allosterically activated by N-acetylglucosamine 6-phosphate (GlcNAc6P). Catalyzes the reversible isomerization-deamination of glucosamine 6-phosphate (GlcN6P) to form fructose 6-phosphate (Fru6P) and ammonium ion. The sequence is that of Glucosamine-6-phosphate deaminase from Actinobacillus pleuropneumoniae serotype 5b (strain L20).